The chain runs to 185 residues: Ribosome-recycling factor (185 aa).

It belongs to the RRF family.

The protein resides in the cytoplasm. Its function is as follows. Responsible for the release of ribosomes from messenger RNA at the termination of protein biosynthesis. May increase the efficiency of translation by recycling ribosomes from one round of translation to another. In Francisella philomiragia subsp. philomiragia (strain ATCC 25017 / CCUG 19701 / FSC 153 / O#319-036), this protein is Ribosome-recycling factor.